Here is a 438-residue protein sequence, read N- to C-terminus: tRNA wybutosine-synthesizing protein 2 homolog (438 aa).

S-adenosyl-L-methionine is bound by residues Ser209, Lys216, Glu256, and 284–285 (DN).

This sequence belongs to the class I-like SAM-binding methyltransferase superfamily. TRM5/TYW2 family.

The enzyme catalyses 4-demethylwyosine(37) in tRNA(Phe) + S-adenosyl-L-methionine = 4-demethyl-7-[(3S)-3-amino-3-carboxypropyl]wyosine(37) in tRNA(Phe) + S-methyl-5'-thioadenosine + H(+). It participates in tRNA modification; wybutosine-tRNA(Phe) biosynthesis. Functionally, S-adenosyl-L-methionine-dependent transferase that acts as a component of the wybutosine biosynthesis pathway. Wybutosine is a hyper modified guanosine with a tricyclic base found at the 3'-position adjacent to the anticodon of eukaryotic phenylalanine tRNA. Catalyzes the transfer of the alpha-amino-alpha-carboxypropyl (acp) group from S-adenosyl-L-methionine to the C-7 position of 4-demethylwyosine (imG-14) to produce wybutosine-86. In Bos taurus (Bovine), this protein is tRNA wybutosine-synthesizing protein 2 homolog (TRMT12).